Reading from the N-terminus, the 413-residue chain is Probable elongation factor 1-gamma 2 (413 aa).

The 82-residue stretch at 1–82 (MALVMHTYKG…YVSRKNGDNS (82 aa)) folds into the GST N-terminal domain. Residues 87–215 (SLIEYAHIEQ…AKQTEAVPPV (129 aa)) enclose the GST C-terminal domain. Residues 207 to 260 (KQTEAVPPVPTKKAPQPAKPKEEPKKAAPVAEAPKPAEEEEAPKPKAKNPLDLL) form a disordered region. In terms of domain architecture, EF-1-gamma C-terminal spans 253 to 413 (AKNPLDLLPP…EALLDAKCFK (161 aa)).

EF-1 is composed of four subunits: alpha, beta, delta, and gamma.

Functionally, probably plays a role in anchoring the complex to other cellular components. The polypeptide is Probable elongation factor 1-gamma 2 (Arabidopsis thaliana (Mouse-ear cress)).